The primary structure comprises 226 residues: PKHD-type hydroxylase MADE_1018490 (226 aa).

The 101-residue stretch at 77–177 folds into the Fe2OG dioxygenase domain; sequence RIFPPCFNRY…RIAAITWIQS (101 aa). Fe cation-binding residues include histidine 95, aspartate 97, and histidine 158. Arginine 168 contacts 2-oxoglutarate.

The cofactor is Fe(2+). It depends on L-ascorbate as a cofactor.

This Alteromonas mediterranea (strain DSM 17117 / CIP 110805 / LMG 28347 / Deep ecotype) protein is PKHD-type hydroxylase MADE_1018490.